Consider the following 120-residue polypeptide: Thiosulfate sulfurtransferase 16, chloroplastic (120 aa).

The region spanning 20–120 is the Rhodanese domain; sequence LLAGHRYLDV…WAKNGLPTKA (101 aa). Cys-80 (cysteine persulfide intermediate) is an active-site residue. Arg-85 provides a ligand contact to substrate.

In terms of assembly, monomer.

It localises to the plastid. The protein resides in the chloroplast. The catalysed reaction is thiosulfate + hydrogen cyanide = thiocyanate + sulfite + 2 H(+). Its function is as follows. Thought to act during the early stages of leaf senescence. Catalyzes the transfer of a sulfur ion from a donor to cyanide or to other thiol compounds. Substrate preference is thiosulfate &gt; 3-mercaptopyruvate. The polypeptide is Thiosulfate sulfurtransferase 16, chloroplastic (STR16) (Arabidopsis thaliana (Mouse-ear cress)).